Reading from the N-terminus, the 81-residue chain is MSITIYTRNNCVQCHATKRAMESRGFEFEMVNVDLVPDAADTLRAQGFRQLPVVMAGDLSWSGFRPDMINRLHPTPHAANA.

Positions 1–81 (MSITIYTRNN…LHPTPHAANA (81 aa)) constitute a Glutaredoxin domain. A disulfide bond links Cys-11 and Cys-14.

This sequence belongs to the glutaredoxin family.

Its function is as follows. Electron transport system for the ribonucleotide reductase system NrdEF. This is Glutaredoxin-like protein NrdH (nrdH) from Salmonella typhimurium (strain LT2 / SGSC1412 / ATCC 700720).